The following is a 70-amino-acid chain: Beta sliding clamp (70 aa).

It belongs to the beta sliding clamp family. Forms a ring-shaped head-to-tail homodimer around DNA which binds and tethers DNA polymerases and other proteins to the DNA. The DNA replisome complex has a single clamp-loading complex (3 tau and 1 each of delta, delta', psi and chi subunits) which binds 3 Pol III cores (1 core on the leading strand and 2 on the lagging strand) each with a beta sliding clamp dimer. Additional proteins in the replisome are other copies of gamma, psi and chi, Ssb, DNA helicase and RNA primase.

The protein resides in the cytoplasm. Confers DNA tethering and processivity to DNA polymerases and other proteins. Acts as a clamp, forming a ring around DNA (a reaction catalyzed by the clamp-loading complex) which diffuses in an ATP-independent manner freely and bidirectionally along dsDNA. Initially characterized for its ability to contact the catalytic subunit of DNA polymerase III (Pol III), a complex, multichain enzyme responsible for most of the replicative synthesis in bacteria; Pol III exhibits 3'-5' exonuclease proofreading activity. The beta chain is required for initiation of replication as well as for processivity of DNA replication. The protein is Beta sliding clamp (dnaN) of Rhodobacter capsulatus (Rhodopseudomonas capsulata).